The sequence spans 471 residues: Adenosylhomocysteinase (471 aa).

Substrate contacts are provided by Thr-60, Asp-135, and Glu-196. Thr-197–Thr-199 provides a ligand contact to NAD(+). Substrate is bound by residues Lys-226 and Asp-230. Residues Asn-231, Gly-260–Gly-265, Glu-283, Asn-318, Ile-339–His-341, and Asn-387 contribute to the NAD(+) site.

Belongs to the adenosylhomocysteinase family. It depends on NAD(+) as a cofactor.

It is found in the cytoplasm. It catalyses the reaction S-adenosyl-L-homocysteine + H2O = L-homocysteine + adenosine. It functions in the pathway amino-acid biosynthesis; L-homocysteine biosynthesis; L-homocysteine from S-adenosyl-L-homocysteine: step 1/1. In terms of biological role, may play a key role in the regulation of the intracellular concentration of adenosylhomocysteine. In Chlorobium phaeovibrioides (strain DSM 265 / 1930) (Prosthecochloris vibrioformis (strain DSM 265)), this protein is Adenosylhomocysteinase.